Consider the following 310-residue polypeptide: Pantoate--beta-alanine ligase (310 aa).

32–39 (MGYLHEGH) is an ATP binding site. Residue His39 is the Proton donor of the active site. (R)-pantoate is bound at residue Gln63. Gln63 serves as a coordination point for beta-alanine. ATP is bound at residue 175–178 (GKKD). Gln181 provides a ligand contact to (R)-pantoate. 212-215 (MSSR) is a binding site for ATP.

This sequence belongs to the pantothenate synthetase family. As to quaternary structure, homodimer. Expressed in roots, cotyledons, leaves, stems, cauline leaves, stigma, sepals and petals.

The protein localises to the cytoplasm. Its subcellular location is the cytosol. It carries out the reaction (R)-pantoate + beta-alanine + ATP = (R)-pantothenate + AMP + diphosphate + H(+). The protein operates within cofactor biosynthesis; (R)-pantothenate biosynthesis; (R)-pantothenate from (R)-pantoate and beta-alanine: step 1/1. Enzyme kinetics do not match Michaelis-Menten kinetics, suggesting allosteric behavior. Inhibited by high pantoate levels. Functionally, catalyzes the condensation of pantoate with beta-alanine to form pantothenate. Essential for panthotenate biosynthesis. The polypeptide is Pantoate--beta-alanine ligase (Arabidopsis thaliana (Mouse-ear cress)).